Consider the following 354-residue polypeptide: UDP-N-acetylglucosamine--N-acetylmuramyl-(pentapeptide) pyrophosphoryl-undecaprenol N-acetylglucosamine transferase (354 aa).

Residues 12 to 14, N124, R163, S187, I240, and Q285 contribute to the UDP-N-acetyl-alpha-D-glucosamine site; that span reads TGG.

The protein belongs to the glycosyltransferase 28 family. MurG subfamily.

It is found in the cell inner membrane. It catalyses the reaction di-trans,octa-cis-undecaprenyl diphospho-N-acetyl-alpha-D-muramoyl-L-alanyl-D-glutamyl-meso-2,6-diaminopimeloyl-D-alanyl-D-alanine + UDP-N-acetyl-alpha-D-glucosamine = di-trans,octa-cis-undecaprenyl diphospho-[N-acetyl-alpha-D-glucosaminyl-(1-&gt;4)]-N-acetyl-alpha-D-muramoyl-L-alanyl-D-glutamyl-meso-2,6-diaminopimeloyl-D-alanyl-D-alanine + UDP + H(+). Its pathway is cell wall biogenesis; peptidoglycan biosynthesis. Functionally, cell wall formation. Catalyzes the transfer of a GlcNAc subunit on undecaprenyl-pyrophosphoryl-MurNAc-pentapeptide (lipid intermediate I) to form undecaprenyl-pyrophosphoryl-MurNAc-(pentapeptide)GlcNAc (lipid intermediate II). This Methylococcus capsulatus (strain ATCC 33009 / NCIMB 11132 / Bath) protein is UDP-N-acetylglucosamine--N-acetylmuramyl-(pentapeptide) pyrophosphoryl-undecaprenol N-acetylglucosamine transferase.